The sequence spans 194 residues: UPF0301 protein BT_0659 (194 aa).

It belongs to the UPF0301 (AlgH) family.

This chain is UPF0301 protein BT_0659, found in Bartonella tribocorum (strain CIP 105476 / IBS 506).